The following is a 394-amino-acid chain: MSSAATVDPNEAFGLITKNLQEVLNPQIIKDVLEVQKRHLKLYWGTAPTGRPHCGYFVPMTKLADFLKAGCEVTVLLADLHAFLDNMKAPLEVVNYRAKYYELTIKAILRSINVPIEKLKFVVGSSYQLTPDYTMDIFRLSNIVSQNDAKRAGADVVKQVANPLLSGLIYPLMQALDEQFLDVDCQFGGVDQRKIFVLAEENLPSLGYKKRAHLMNPMVPGLAQGGKMSASDPNSKIDLLEEPKQVKKKINSAFCSPGNVEENGLLSFVQYVIAPIQELKFGTNHFEFFIDRPEKFGGPITYKSFEEMKLAFKEEKLSPPDLKIGVADAINELLEPIRQEFANNKEFQEASEKGYPVATPQKSKKAKKPKNKGTKYPGATKTNEIATKLEETKL.

Serine 2 carries the N-acetylserine modification. Tyrosine 43 is an L-tyrosine binding site. The 'HIGH' region signature appears at 48 to 56; it reads PTGRPHCGY. L-tyrosine-binding residues include tyrosine 170, glutamine 174, aspartate 177, and glutamine 192. Positions 227-231 match the 'KMSKS' region motif; it reads KMSAS. Serine 235 bears the Phosphoserine mark. Residues 348 to 394 form a disordered region; the sequence is QEASEKGYPVATPQKSKKAKKPKNKGTKYPGATKTNEIATKLEETKL. The residue at position 359 (threonine 359) is a Phosphothreonine. The Nuclear localization signal signature appears at 360-378; sequence PQKSKKAKKPKNKGTKYPG. Basic residues predominate over residues 362-373; sequence KSKKAKKPKNKG.

This sequence belongs to the class-I aminoacyl-tRNA synthetase family. In terms of assembly, homodimer. Interacts with KNR4/SMI1.

It is found in the cytoplasm. The protein localises to the nucleus. It carries out the reaction tRNA(Tyr) + L-tyrosine + ATP = L-tyrosyl-tRNA(Tyr) + AMP + diphosphate + H(+). Inhibited by N-ethylmaleimide and p-chloromercuribenzoate. Catalyzes the attachment of L-tyrosine to tRNA(Tyr) in a two-step reaction: L-tyrosine is first activated by ATP to form Tyr-AMP and then transferred to the acceptor end of tRNA(Tyr). The specificity determinants on tRNA(Tyr) are the base pair C1-G72, the discriminator residue A73, and the three anticodon bases G34, U35 and A36. Also involved in nuclear tRNA export. Also attaches D-Tyr to tRNA(Tyr), this reaction is about 150-fold less efficient than attachment of L-Tyr. This chain is Tyrosine--tRNA ligase, cytoplasmic, found in Saccharomyces cerevisiae (strain ATCC 204508 / S288c) (Baker's yeast).